Reading from the N-terminus, the 501-residue chain is ADP,ATP carrier protein 3 (501 aa).

The next 12 membrane-spanning stretches (helical) occupy residues 23 to 43 (LKLF…FGAL), 59 to 79 (IISF…TVLY), 90 to 110 (YIFY…AYII), 146 to 166 (YALM…LMFW), 183 to 203 (PVLG…LVFF), 227 to 247 (IMLQ…MLLF), 293 to 313 (IALL…PWKA), 326 to 346 (VNFM…FMII), 361 to 381 (LLTP…IIFI), 387 to 407 (CFGD…QNIL), 446 to 466 (FGKS…PTAT), and 470 to 490 (IIIY…WNVI).

It belongs to the ADP/ATP translocase tlc family.

The protein localises to the cell membrane. Its function is as follows. Provides the rickettsial cell with host ATP in exchange for rickettsial ADP. This is an obligate exchange system. This energy acquiring activity is an important component of rickettsial parasitism. In Rickettsia conorii (strain ATCC VR-613 / Malish 7), this protein is ADP,ATP carrier protein 3 (tlcC).